Consider the following 185-residue polypeptide: Large ribosomal subunit protein uL13 (185 aa).

This sequence belongs to the universal ribosomal protein uL13 family. As to quaternary structure, part of the 50S ribosomal subunit.

This protein is one of the early assembly proteins of the 50S ribosomal subunit, although it is not seen to bind rRNA by itself. It is important during the early stages of 50S assembly. The protein is Large ribosomal subunit protein uL13 of Pyrobaculum islandicum (strain DSM 4184 / JCM 9189 / GEO3).